Reading from the N-terminus, the 210-residue chain is Resolvase (210 aa).

In terms of domain architecture, Resolvase/invertase-type recombinase catalytic spans 6 to 150 (VARVYLRVSS…EDRRERQRQG (145 aa)). Ser14 serves as the catalytic O-(5'-phospho-DNA)-serine intermediate. The segment at residues 191–210 (GVSVSQVKRVWAQNQTKDKV) is a DNA-binding region (H-T-H motif).

It belongs to the site-specific recombinase resolvase family.

Functionally, site-specific recombination protein. The polypeptide is Resolvase (stbA) (Pseudomonas syringae pv. tomato).